A 370-amino-acid chain; its full sequence is uncharacterized protein (370 aa).

The N-terminal stretch at 1 to 27 (MSSAANEGCVYLFIVVLRLSSFSCVNS) is a signal peptide. N-linked (GlcNAc...) asparagine glycans are attached at residues Asn-59, Asn-98, and Asn-126. 2 disordered regions span residues 81-101 (SRSH…NTTA) and 123-167 (LSEN…CHQP). Over residues 139–148 (HDDDDDDDLE) the composition is skewed to acidic residues. N-linked (GlcNAc...) asparagine glycans are attached at residues Asn-171, Asn-221, Asn-230, and Asn-262.

This is an uncharacterized protein from Saccharomyces cerevisiae (strain ATCC 204508 / S288c) (Baker's yeast).